The sequence spans 412 residues: Imidazolonepropionase (412 aa).

Fe(3+) contacts are provided by H76 and H78. H76 and H78 together coordinate Zn(2+). 4-imidazolone-5-propanoate-binding residues include R85, Y148, and H181. Y148 serves as a coordination point for N-formimidoyl-L-glutamate. H242 provides a ligand contact to Fe(3+). Zn(2+) is bound at residue H242. Position 245 (E245) interacts with 4-imidazolone-5-propanoate. D317 serves as a coordination point for Fe(3+). D317 lines the Zn(2+) pocket. N-formimidoyl-L-glutamate contacts are provided by N319 and G321. S322 provides a ligand contact to 4-imidazolone-5-propanoate.

This sequence belongs to the metallo-dependent hydrolases superfamily. HutI family. It depends on Zn(2+) as a cofactor. Requires Fe(3+) as cofactor.

The protein resides in the cytoplasm. The catalysed reaction is 4-imidazolone-5-propanoate + H2O = N-formimidoyl-L-glutamate. Its pathway is amino-acid degradation; L-histidine degradation into L-glutamate; N-formimidoyl-L-glutamate from L-histidine: step 3/3. Functionally, catalyzes the hydrolytic cleavage of the carbon-nitrogen bond in imidazolone-5-propanoate to yield N-formimidoyl-L-glutamate. It is the third step in the universal histidine degradation pathway. This is Imidazolonepropionase from Staphylococcus aureus (strain bovine RF122 / ET3-1).